A 193-amino-acid polypeptide reads, in one-letter code: MAMNAKFRVPFRRRREGKTDFRQRLGLLLSGKPRLVARKSLNNVTAQLMAYDEKGDVVLVSAHSKELVKMGYKGHCGNLPAAYLTGLLLGAKAVKEDVKEAVLDKGLHRATKGAAIFAVLKGALDAGMDIPHGDKIIADEERLNGTHVKNYAESLKEDADAYKKQFSKYLEKGLNPEDLPEHVEELKEKILNL.

Belongs to the universal ribosomal protein uL18 family. As to quaternary structure, part of the 50S ribosomal subunit. Contacts the 5S and 23S rRNAs.

Functionally, this is one of the proteins that bind and probably mediate the attachment of the 5S RNA into the large ribosomal subunit, where it forms part of the central protuberance. This Methanococcus maripaludis (strain DSM 14266 / JCM 13030 / NBRC 101832 / S2 / LL) protein is Large ribosomal subunit protein uL18.